Consider the following 164-residue polypeptide: Pyruvoyl-dependent arginine decarboxylase (164 aa).

Serine 52 is modified (pyruvic acid (Ser)).

It belongs to the PdaD family. Pyruvate serves as cofactor.

It carries out the reaction L-arginine + H(+) = agmatine + CO2. The protein is Pyruvoyl-dependent arginine decarboxylase of Methanococcus maripaludis (strain C6 / ATCC BAA-1332).